A 222-amino-acid chain; its full sequence is tRNA (guanine-N(1)-)-methyltransferase (222 aa).

Residues Gly110 and 130–135 (IGDYVL) each bind S-adenosyl-L-methionine.

The protein belongs to the RNA methyltransferase TrmD family. As to quaternary structure, homodimer.

The protein localises to the cytoplasm. It carries out the reaction guanosine(37) in tRNA + S-adenosyl-L-methionine = N(1)-methylguanosine(37) in tRNA + S-adenosyl-L-homocysteine + H(+). Specifically methylates guanosine-37 in various tRNAs. The polypeptide is tRNA (guanine-N(1)-)-methyltransferase (Protochlamydia amoebophila (strain UWE25)).